A 354-amino-acid chain; its full sequence is G-protein coupled receptor homolog US28 (354 aa).

Residues 1 to 37 (MTPTTTTAELTTEFDYDEDATPCVFTDVLNQSKPVTL) lie on the Extracellular side of the membrane. An N-linked (GlcNAc...) asparagine; by host glycan is attached at Asn30. Residues 38 to 58 (FLYGVVFLFGSIGNFLVIFTI) form a helical membrane-spanning segment. Residues 59–69 (TWRRRIQCSGD) are Cytoplasmic-facing. A helical membrane pass occupies residues 70-90 (VYFINLAAADLLFVCTLPLWM). The Extracellular segment spans residues 91–101 (QYLLDHNSLAS). The chain crosses the membrane as a helical span at residues 102–122 (VPCTLLTACFYVAMFASLCFI). Over 123 to 145 (TEIALDRYYAIVYMRYRPVKQAC) the chain is Cytoplasmic. A helical membrane pass occupies residues 146–166 (LFSIFWWIFAVIIAIPHFMVV). The Extracellular portion of the chain corresponds to 167–183 (TKKDNQCMTDYDYLEVS). A helical transmembrane segment spans residues 184–204 (YPIILNVELMLGAFVIPLSVI). Topologically, residues 205-228 (SYCYYRISRIVAVSQSRHKGRIVR) are cytoplasmic. Residues 229–249 (VLIAVVLVFIIFWLPYHLTLF) traverse the membrane as a helical segment. The Extracellular portion of the chain corresponds to 250 to 273 (VDTLKLLKWISSSCEFERSLKRAL). Residues 274–294 (ILTESLAFCHCCLNPLLYVFV) traverse the membrane as a helical segment. Residues 295–354 (GTKFRQELHCLLAEFRQRLFSRDVSWYHSMSFSRRSSPSRRETSSDTLSDEVCRVSQIIP) lie on the Cytoplasmic side of the membrane.

It belongs to the G-protein coupled receptor 1 family. In terms of assembly, interacts with host GPRASP1; this interaction targets US28 to lysosomes for degradation. Interacts with host CX3CL1/Fractalkine (via N-terminus). Interacts with host Gi alpha-1 subunit GNAI1; this interaction does not lead to the catalytic activation of Gi complex. In terms of processing, phosphorylated. High phosphorylation occurs concomitantly with receptor endocytosis and correlate with low receptor presence at the plasma membrane.

The protein resides in the host cell membrane. Functionally, binds to a great number of different CC-chemokines including CCL5/RANTES, CCL2/MCP-1, CCL3/MIP-1-alpha as well as CX3CL1/Fractalkine. Transduces signals resulting in the activation of MAP kinase signaling pathways and augmentation of intracellular calcium ion levels, leading to alterations in chemotactic behavior of vascular smooth muscle cells and macrophages. The US28 receptor also exhibits high levels of agonist-independent signaling activity and agonist-independent endocytosis. Interacts with the host Gi complex without activating it, thereby probably interfering with the chemokine-Gi signaling. May also function as a G protein sink to sequester G protein from the cell surface via internalization. Interacts with endogenous Gaq/11 subunits and thereby constitutively activates phospholipase C. This is G-protein coupled receptor homolog US28 (US28) from Homo sapiens (Human).